The following is a 188-amino-acid chain: Elongation factor P (188 aa).

At K34 the chain carries N6-(3,6-diaminohexanoyl)-5-hydroxylysine.

Belongs to the elongation factor P family. May be beta-lysylated on the epsilon-amino group of Lys-34 by the combined action of EpmA and EpmB, and then hydroxylated on the C5 position of the same residue by EpmC (if this protein is present). Lysylation is critical for the stimulatory effect of EF-P on peptide-bond formation. The lysylation moiety may extend toward the peptidyltransferase center and stabilize the terminal 3-CCA end of the tRNA. Hydroxylation of the C5 position on Lys-34 may allow additional potential stabilizing hydrogen-bond interactions with the P-tRNA.

It localises to the cytoplasm. Its pathway is protein biosynthesis; polypeptide chain elongation. In terms of biological role, involved in peptide bond synthesis. Alleviates ribosome stalling that occurs when 3 or more consecutive Pro residues or the sequence PPG is present in a protein, possibly by augmenting the peptidyl transferase activity of the ribosome. Modification of Lys-34 is required for alleviation. The chain is Elongation factor P from Vibrio vulnificus (strain CMCP6).